The chain runs to 37 residues: Antifungal protein 4 (37 aa).

The protein localises to the secreted. Functionally, possesses antifungal activity against P.infestans but not F.graminearum. The chain is Antifungal protein 4 from Malva parviflora (Little mallow).